Here is a 247-residue protein sequence, read N- to C-terminus: MSHRDTLFSAPIARLGDWTFDERVAEVFPDMIQRSVPGYSNIISMIGMLAERFVQPGTQVYDLGCSLGAATLSVRRNIHHDNCKIIAIDNSPAMIERCSRHIDAYKAPTPVDVIEGDIRDIAIENASMVVLNFTLQFLEPSERQALLDKIYQGLNPGGALVLSEKFSFEDAKVGELLFNMHHDFKRANGYSELEISQKRSMLENVMLTDSVETHKARLHKAGFEHSELWFQCFNFGSLVALKAEDAA.

S-adenosyl-L-methionine-binding positions include tyrosine 39, 64 to 66 (GCS), 89 to 90 (DN), 117 to 118 (DI), asparagine 132, and arginine 199.

It belongs to the class I-like SAM-binding methyltransferase superfamily. Cx-SAM synthase family. In terms of assembly, homodimer.

The enzyme catalyses prephenate + S-adenosyl-L-methionine = carboxy-S-adenosyl-L-methionine + 3-phenylpyruvate + H2O. Functionally, catalyzes the conversion of S-adenosyl-L-methionine (SAM) to carboxy-S-adenosyl-L-methionine (Cx-SAM). The protein is Carboxy-S-adenosyl-L-methionine synthase of Shigella sonnei (strain Ss046).